We begin with the raw amino-acid sequence, 270 residues long: Transcription factor PU.1 (270 aa).

A disordered region spans residues 124-162 (LSPAQPSSDEEEGERQSPPLEVSDGEADGLEPGPGLLHG). Ser140 and Ser146 each carry phosphoserine. Low complexity predominate over residues 153–162 (LEPGPGLLHG). The ETS DNA-binding region spans 170–253 (IRLYQFLLDL…VKKKLTYQFS (84 aa)). The DNA site is built by Lys217, Arg230, Arg233, and Lys243.

It belongs to the ETS family. Binds DNA as a monomer. Can form homomers. Directly interacts with CEBPD/NF-IL6-beta; this interaction does not affect DNA-binding properties of each partner. Interacts with NONO/p54(nrb). Interacts with RUNX1/AML1. Interacts with GFI1; the interaction represses SPI1 transcriptional activity, hence blocks SPI1-induced macrophage differentiation of myeloid progenitor cells. Interacts with CEBPE. Interacts with IRF4/Pip and IRF8. Interacts with JUN. Interacts with RB1. Interacts with TBP.

It localises to the nucleus. Transcriptional activity at macrophage-specific genes is inhibited by interaction with GFI1, which results in the inhibition of SPI1-induced macrophage differentiation of myeloid progenitor cells, but not that of the granulocyte lineage. In terms of biological role, pioneer transcription factor, which controls hematopoietic cell fate by decompacting stem cell heterochromatin and allowing other transcription factors to enter otherwise inaccessible genomic sites. Once in open chromatin, can directly control gene expression by binding genetic regulatory elements and can also more broadly influence transcription by recruiting transcription factors, such as interferon regulatory factors (IRFs), to otherwise inaccessible genomic regions. Transcriptionally activates genes important for myeloid and lymphoid lineages, such as CSF1R. Transcriptional activation from certain promoters, possibly containing low affinity binding sites, is achieved cooperatively with other transcription factors. FCER1A transactivation is achieved in cooperation with GATA1. May be particularly important for the pro- to pre-B cell transition. Binds (via the ETS domain) onto the purine-rich DNA core sequence 5'-GAGGAA-3', also known as the PU-box. In vitro can bind RNA and interfere with pre-mRNA splicing. In Sus scrofa (Pig), this protein is Transcription factor PU.1 (SPI1).